A 359-amino-acid chain; its full sequence is Carbamoyl phosphate synthase small chain (359 aa).

The interval 1–169 is CPSase; the sequence is MTKRILVLED…TKTSYPAPGV (169 aa). L-glutamine-binding residues include S46, G220, and G222. The region spanning 172–358 is the Glutamine amidotransferase type-1 domain; it reads SVVLVDFGLK…IEMMEVFKQS (187 aa). C247 functions as the Nucleophile in the catalytic mechanism. L-glutamine contacts are provided by M248, Q251, N289, G291, and Y292. Active-site residues include H331 and D333.

Belongs to the CarA family. In terms of assembly, composed of two chains; the small (or glutamine) chain promotes the hydrolysis of glutamine to ammonia, which is used by the large (or ammonia) chain to synthesize carbamoyl phosphate. Tetramer of heterodimers (alpha,beta)4.

The enzyme catalyses hydrogencarbonate + L-glutamine + 2 ATP + H2O = carbamoyl phosphate + L-glutamate + 2 ADP + phosphate + 2 H(+). It catalyses the reaction L-glutamine + H2O = L-glutamate + NH4(+). The protein operates within amino-acid biosynthesis; L-arginine biosynthesis; carbamoyl phosphate from bicarbonate: step 1/1. Its pathway is pyrimidine metabolism; UMP biosynthesis via de novo pathway; (S)-dihydroorotate from bicarbonate: step 1/3. In terms of biological role, small subunit of the glutamine-dependent carbamoyl phosphate synthetase (CPSase). CPSase catalyzes the formation of carbamoyl phosphate from the ammonia moiety of glutamine, carbonate, and phosphate donated by ATP, constituting the first step of 2 biosynthetic pathways, one leading to arginine and/or urea and the other to pyrimidine nucleotides. The small subunit (glutamine amidotransferase) binds and cleaves glutamine to supply the large subunit with the substrate ammonia. The chain is Carbamoyl phosphate synthase small chain from Streptococcus pneumoniae (strain ATCC BAA-255 / R6).